A 397-amino-acid chain; its full sequence is uncharacterized protein (397 aa).

4 helical membrane-spanning segments follow: residues 255–275 (LLTYGISLTIISIFLYMICYA), 284–304 (MITFQWILFTGGLSALGVLLA), 308–328 (LITALVAFLSAPITTLVPLPL), and 370–390 (VLLVATLSNLGASIGVFYCLG).

It localises to the cell membrane. This is an uncharacterized protein from Methanocaldococcus jannaschii (strain ATCC 43067 / DSM 2661 / JAL-1 / JCM 10045 / NBRC 100440) (Methanococcus jannaschii).